We begin with the raw amino-acid sequence, 225 residues long: Ribonuclease T (225 aa).

The segment at 1–21 (MSEDHFDDEHEGHGGGGGSRH) is disordered. In terms of domain architecture, Exonuclease spans 33–207 (VVVDVETGGF…YDTEKTAELF (175 aa)). Residues Asp36, Glu38, His194, and Asp199 each coordinate Mg(2+). The active-site Proton donor/acceptor is the His194.

The protein belongs to the RNase T family. Homodimer. Requires Mg(2+) as cofactor.

Its function is as follows. Trims short 3' overhangs of a variety of RNA species, leaving a one or two nucleotide 3' overhang. Responsible for the end-turnover of tRNA: specifically removes the terminal AMP residue from uncharged tRNA (tRNA-C-C-A). Also appears to be involved in tRNA biosynthesis. The protein is Ribonuclease T of Pseudomonas savastanoi pv. phaseolicola (strain 1448A / Race 6) (Pseudomonas syringae pv. phaseolicola (strain 1448A / Race 6)).